The chain runs to 209 residues: Ribosomal RNA large subunit methyltransferase E (209 aa).

S-adenosyl-L-methionine-binding residues include Gly63, Trp65, Asp83, Asp99, and Asp124. Residue Lys164 is the Proton acceptor of the active site.

This sequence belongs to the class I-like SAM-binding methyltransferase superfamily. RNA methyltransferase RlmE family.

Its subcellular location is the cytoplasm. The catalysed reaction is uridine(2552) in 23S rRNA + S-adenosyl-L-methionine = 2'-O-methyluridine(2552) in 23S rRNA + S-adenosyl-L-homocysteine + H(+). In terms of biological role, specifically methylates the uridine in position 2552 of 23S rRNA at the 2'-O position of the ribose in the fully assembled 50S ribosomal subunit. The protein is Ribosomal RNA large subunit methyltransferase E of Pseudoalteromonas translucida (strain TAC 125).